The primary structure comprises 229 residues: Protein TraJ (229 aa).

It is found in the cytoplasm. Its function is as follows. This protein is essential for positively regulating the expression of transfer genes that are involved in the conjugal transfer of DNA between bacterial cells. This Escherichia coli (strain K12) protein is Protein TraJ (traJ).